A 227-amino-acid polypeptide reads, in one-letter code: Ribonuclease 3 (227 aa).

Residues 3 to 130 enclose the RNase III domain; sequence TNAISKIIKY…LIGAIYLDGG (128 aa). E43 is a Mg(2+) binding site. D47 is a catalytic residue. N116 and E119 together coordinate Mg(2+). The active site involves E119. A DRBM domain is found at 155 to 224; it reads DAKTILQEWA…ASLMLAKINY (70 aa).

The protein belongs to the ribonuclease III family. Homodimer. It depends on Mg(2+) as a cofactor.

The protein localises to the cytoplasm. It catalyses the reaction Endonucleolytic cleavage to 5'-phosphomonoester.. Its function is as follows. Digests double-stranded RNA. Involved in the processing of primary rRNA transcript to yield the immediate precursors to the large and small rRNAs (23S and 16S). Processes some mRNAs, and tRNAs when they are encoded in the rRNA operon. Processes pre-crRNA and tracrRNA of type II CRISPR loci if present in the organism. This chain is Ribonuclease 3, found in Ehrlichia ruminantium (strain Gardel).